A 255-amino-acid polypeptide reads, in one-letter code: Triosephosphate isomerase (255 aa).

A substrate-binding site is contributed by 9–11 (NWK). His96 acts as the Electrophile in catalysis. The active-site Proton acceptor is Glu168. Substrate contacts are provided by Gly174 and Ser213.

This sequence belongs to the triosephosphate isomerase family. As to quaternary structure, homodimer.

It localises to the cytoplasm. The catalysed reaction is D-glyceraldehyde 3-phosphate = dihydroxyacetone phosphate. Its pathway is carbohydrate biosynthesis; gluconeogenesis. It participates in carbohydrate degradation; glycolysis; D-glyceraldehyde 3-phosphate from glycerone phosphate: step 1/1. In terms of biological role, involved in the gluconeogenesis. Catalyzes stereospecifically the conversion of dihydroxyacetone phosphate (DHAP) to D-glyceraldehyde-3-phosphate (G3P). This is Triosephosphate isomerase from Buchnera aphidicola subsp. Acyrthosiphon pisum (strain APS) (Acyrthosiphon pisum symbiotic bacterium).